Consider the following 820-residue polypeptide: MNESYQPTLIEQLAQEYWEENETFEVKEDLSREKFYCLSMLPYPSGDLHMGHVRNYTIGDVIARYQIHKGRNVLQPMGWDAFGLPAENAAIQRELPPAEWTRKNIKKMRKQLKQLGFAYDWSREITTCDSTYYRWEQWLFLQLYKKGLAYKKNAIVNWDPVDQTVLANEQIVDGRGWRSGAVVERREISQWFLKITDYSEELLKDLDELKEWPEQVITMQRNWIGQSQGVIINFNLEKGPDKLQVYTTRPDTLMGVTYLAIAPEHPLAKERAKKSKKIAAFLKKCKQTRVAEADIATQEKEGIDSGLFAVHPLSKEKLPIWIANFVLMEYASGVVMAVPAHDERDHEFALKYDLPLKPVIEPADGHDWDYNQAAYTNPGKLINSGSFNDIDSKTAFNVIADYLKNNGAGSRQTHYRLRDWGISRQRYWGTPIPIIYCKTCGTVPVPENQLPVLLPEDIIPTGHGSPLKETASFYKTRCPVCNKPATRETDTMDTFVESSWYYARYSCPDQDKVMLDDRAKYWTPVDQYIGGIEHAVMHLLYARFMHKILRDLGLLNSNEPFIRLLTQGMVLKDGAKMSKSKGNVVTPQSLIKKYGADTVRLFIIFAAPPEQDLEWSDSGVEGAYRFLKKLWGFSYRIKDALLAVNQQKERSNYQWEAPEHRQTRQQIHECLQQANIDMERLQFNTVVSAVMKILNILIKLTTDNDAEAHLIREGTGILLRLLSPITPHISHHLWQSLGFGGDILDTPWPRPDPKALQTTELELIVQINGKLRGRIQVPTEASKEIIESTALNQENVQRHLADKKIKKVIVVPKKLINIVV.

Residues 42–52 carry the 'HIGH' region motif; the sequence is PYPSGDLHMGH. The 'KMSKS' region motif lies at 576–580; it reads KMSKS. Lysine 579 contacts ATP.

The protein belongs to the class-I aminoacyl-tRNA synthetase family.

The protein localises to the cytoplasm. The catalysed reaction is tRNA(Leu) + L-leucine + ATP = L-leucyl-tRNA(Leu) + AMP + diphosphate. In Coxiella burnetii (strain Dugway 5J108-111), this protein is Leucine--tRNA ligase.